Reading from the N-terminus, the 260-residue chain is Flap endonuclease Xni (260 aa).

Residue Asp112 coordinates Mg(2+). Residues Leu168–Pro258 enclose the 5'-3' exonuclease domain. 3 residues coordinate K(+): Leu179, Val190, and Ile193. Residues Gly192–Thr197 are interaction with DNA.

It belongs to the Xni family. The cofactor is Mg(2+). K(+) is required as a cofactor.

Functionally, has flap endonuclease activity. During DNA replication, flap endonucleases cleave the 5'-overhanging flap structure that is generated by displacement synthesis when DNA polymerase encounters the 5'-end of a downstream Okazaki fragment. This chain is Flap endonuclease Xni, found in Tolumonas auensis (strain DSM 9187 / NBRC 110442 / TA 4).